Here is a 162-residue protein sequence, read N- to C-terminus: Transcription elongation factor GreA (162 aa).

A coiled-coil region spans residues Glu-45–Glu-74.

It belongs to the GreA/GreB family.

Functionally, necessary for efficient RNA polymerase transcription elongation past template-encoded arresting sites. The arresting sites in DNA have the property of trapping a certain fraction of elongating RNA polymerases that pass through, resulting in locked ternary complexes. Cleavage of the nascent transcript by cleavage factors such as GreA or GreB allows the resumption of elongation from the new 3'terminus. GreA releases sequences of 2 to 3 nucleotides. This chain is Transcription elongation factor GreA, found in Rickettsia felis (strain ATCC VR-1525 / URRWXCal2) (Rickettsia azadi).